Here is a 427-residue protein sequence, read N- to C-terminus: Serine--tRNA ligase (427 aa).

235–237 (TAE) is an L-serine binding site. ATP is bound by residues 266-268 (RRE) and Val-282. Position 289 (Glu-289) interacts with L-serine. 353 to 356 (EASS) provides a ligand contact to ATP. Ser-389 contributes to the L-serine binding site.

It belongs to the class-II aminoacyl-tRNA synthetase family. Type-1 seryl-tRNA synthetase subfamily. As to quaternary structure, homodimer. The tRNA molecule binds across the dimer.

The protein localises to the cytoplasm. It catalyses the reaction tRNA(Ser) + L-serine + ATP = L-seryl-tRNA(Ser) + AMP + diphosphate + H(+). It carries out the reaction tRNA(Sec) + L-serine + ATP = L-seryl-tRNA(Sec) + AMP + diphosphate + H(+). Its pathway is aminoacyl-tRNA biosynthesis; selenocysteinyl-tRNA(Sec) biosynthesis; L-seryl-tRNA(Sec) from L-serine and tRNA(Sec): step 1/1. Catalyzes the attachment of serine to tRNA(Ser). Is also able to aminoacylate tRNA(Sec) with serine, to form the misacylated tRNA L-seryl-tRNA(Sec), which will be further converted into selenocysteinyl-tRNA(Sec). The polypeptide is Serine--tRNA ligase (Chlorobium phaeobacteroides (strain BS1)).